We begin with the raw amino-acid sequence, 161 residues long: Ubiquitin D (161 aa).

Ubiquitin-like domains are found at residues 3 to 77 (SCVC…LKVV) and 86 to 159 (LSLV…AHCI).

It belongs to the ubiquitin D family. As to quaternary structure, interacts directly with the 26S proteasome. Interacts with NUB1; this interaction facilitates the linking of UBD-conjugated target protein to the proteasome complex and accelerates its own degradation and that of its conjugates. Interacts (via ubiquitin-like 1 domain) with the spindle checkpoint protein MAD2L1 during mitosis. Present in aggresomes of proteasome inhibited cells. Interacts with HDAC6 under proteasome impairment conditions. Forms a thioester with UBA6 in cells stimulated with tumor necrosis factor-alpha (TNFa) and interferon-gamma (IFNg). Interacts with SQSTM1 and TP53/p53. Can be acetylated.

It localises to the nucleus. The protein resides in the cytoplasm. Its function is as follows. Ubiquitin-like protein modifier which can be covalently attached to target proteins and subsequently leads to their degradation by the 26S proteasome, in a NUB1-dependent manner. Conjugation to the target protein is activated by UBA6 via adenylation of its C-terminal glycine. Probably functions as a survival factor. Promotes the expression of the proteasome subunit beta type-9 (PSMB9/LMP2). Regulates TNF-alpha-induced and LPS-mediated activation of the central mediator of innate immunity NF-kappa-B by promoting TNF-alpha-mediated proteasomal degradation of ubiquitinated-I-kappa-B-alpha. Required for TNF-alpha-induced p65 nuclear translocation in renal tubular epithelial cells (RTECs). May be involved in dendritic cell (DC) maturation, the process by which immature dendritic cells differentiate into fully competent antigen-presenting cells that initiate T-cell responses. Mediates mitotic non-disjunction and chromosome instability, in long-term in vitro culture and cancers, by abbreviating mitotic phase and impairing the kinetochore localization of MAD2L1 during the prometaphase stage of the cell cycle. May be involved in the formation of aggresomes when proteasome is saturated or impaired. Mediates apoptosis in a caspase-dependent manner, especially in renal epithelium and tubular cells during renal diseases. This Rattus norvegicus (Rat) protein is Ubiquitin D (Ubd).